We begin with the raw amino-acid sequence, 146 residues long: Putative type II restriction enzyme MjaORF1200P (146 aa).

To A.pernix APE2001.

It catalyses the reaction Endonucleolytic cleavage of DNA to give specific double-stranded fragments with terminal 5'-phosphates.. In terms of biological role, a putative type II restriction enzyme, its methylase would be M.MjaORF1200P (AC Q58600). The polypeptide is Putative type II restriction enzyme MjaORF1200P (Methanocaldococcus jannaschii (strain ATCC 43067 / DSM 2661 / JAL-1 / JCM 10045 / NBRC 100440) (Methanococcus jannaschii)).